The following is a 258-amino-acid chain: Octanoyltransferase (258 aa).

Residues 42 to 226 form the BPL/LPL catalytic domain; it reads NLGADTLLLL…AVVAALDGAL (185 aa). Substrate is bound by residues 80–87, 156–158, and 169–171; these read RGGKITWH, AIG, and GFS. The Acyl-thioester intermediate role is filled by Cys-187.

Belongs to the LipB family.

The protein resides in the cytoplasm. It catalyses the reaction octanoyl-[ACP] + L-lysyl-[protein] = N(6)-octanoyl-L-lysyl-[protein] + holo-[ACP] + H(+). The protein operates within protein modification; protein lipoylation via endogenous pathway; protein N(6)-(lipoyl)lysine from octanoyl-[acyl-carrier-protein]: step 1/2. Functionally, catalyzes the transfer of endogenously produced octanoic acid from octanoyl-acyl-carrier-protein onto the lipoyl domains of lipoate-dependent enzymes. Lipoyl-ACP can also act as a substrate although octanoyl-ACP is likely to be the physiological substrate. This chain is Octanoyltransferase, found in Rhodococcus opacus (strain B4).